Consider the following 148-residue polypeptide: General odorant-binding protein 69a (148 aa).

Positions 1–23 (MVARHFSFFLALLILYDLIPSNQ) are cleaved as a signal peptide. Cystine bridges form between C42/C74, C70/C121, and C112/C130.

The protein belongs to the PBP/GOBP family. Expressed in the antenna, mostly on the anterior surface of the third antennal segment. Expressed in auxiliary cells and the third antennal segment and exported to the sensillar lymph (at protein level).

It is found in the secreted. Odorant-binding protein required for olfactory behavior and activity of pheromone-sensitive neurons in response to the male-specific pheromone cis-vaccenyl acetate (cVA). Modulates social responsivity differently in males and females, regulating male aggression and female receptivity respectively. This Drosophila melanogaster (Fruit fly) protein is General odorant-binding protein 69a (Obp69a).